We begin with the raw amino-acid sequence, 227 residues long: Small ribosomal subunit protein uS7 (227 aa).

Composition is skewed to acidic residues over residues methionine 1–aspartate 12 and asparagine 20–serine 31. The segment at methionine 1–alanine 43 is disordered. Positions alanine 32–alanine 43 are enriched in low complexity.

Belongs to the universal ribosomal protein uS7 family. As to quaternary structure, part of the 30S ribosomal subunit.

Functionally, one of the primary rRNA binding proteins, it binds directly to 16S rRNA where it nucleates assembly of the head domain of the 30S subunit. Is located at the subunit interface close to the decoding center. The sequence is that of Small ribosomal subunit protein uS7 from Haloquadratum walsbyi (strain DSM 16790 / HBSQ001).